The chain runs to 802 residues: Mitogen-activated protein kinase kinase kinase 20 (802 aa).

An N-acetylserine modification is found at serine 2. 3 positions are modified to phosphoserine: serine 2, serine 3, and serine 7. In terms of domain architecture, Protein kinase spans 16–277; sequence LQFFENCGGG…NLPDQCNSFL (262 aa). Residues 22–30 and lysine 45 each bind ATP; that span reads CGGGSFGSV. Aspartate 133 (proton acceptor) is an active-site residue. Threonine 161 carries the phosphothreonine; by autocatalysis modification. Serine 165 bears the Phosphoserine; by autocatalysis mark. Phosphoserine is present on residues serine 275 and serine 302. The leucine-zipper stretch occupies residues 287-308; it reads IEATLERLKKLERDLSFKEQEL. The SAM domain maps to 339 to 410; sequence WTEDDVYFWV…KSAIEKLTHD (72 aa). A phosphoserine mark is found at lysine 434, glutamine 453, and serine 567. Phosphothreonine is present on threonine 586. Residues serine 587, serine 593, and serine 599 each carry the phosphoserine modification. Residues 624 to 642 show a composition bias toward polar residues; that stretch reads YQQITPSINPSRSSSPTQY. A disordered region spans residues 624–802; the sequence is YQQITPSINP…RGNYRGRRNF (179 aa). Threonine 628 carries the post-translational modification Phosphothreonine. Phosphoserine occurs at positions 634, 638, 649, 650, and 661. Residues 643-666 are compositionally biased toward low complexity; sequence GLSRNFSSLNLSSRDSGFSSLNDS. Residues 667–678 show a composition bias toward basic and acidic residues; sequence SSERGRYSDRSR. Residues 670-713 are sensing domain (S); sequence RGRYSDRSRNKYYRGSVSLNSSPKGRYGGKSQHSTPSRERYSGK. 4 positions are modified to phosphoserine: serine 685, serine 720, serine 727, and serine 733. Residues 728–741 are compositionally biased toward basic and acidic residues; the sequence is PDFKRSPNDHDRRV. At threonine 744 the chain carries Phosphothreonine. The interval 776–802 is C-terminal domain (CTD); that stretch reads RKKTHRQLSAKTSKERTRGNYRGRRNF.

It belongs to the protein kinase superfamily. STE Ser/Thr protein kinase family. MAP kinase kinase kinase subfamily. Homodimer. Interacts with ZNF33A. Component of a signaling complex containing at least AKAP13, PKN1, MAPK14, MAP3K20 and MAP2K3. Within this complex, AKAP13 interacts directly with PKN1, which in turn recruits MAPK14, MAP2K3 and MAP3K20. Interacts with EIF2AK4/GCN2; promoting EIF2AK4/GCN2 kinase activity. In terms of assembly, interacts with isoform ZAKbeta. As to quaternary structure, interacts with isoform ZAKalpha. Mg(2+) serves as cofactor. Activated by phosphorylation by PKN1, followed by autophosphorylation on Thr-161 and Ser-165. Autophosphorylation in response to ribotoxic stress promotes dissociation from colliding ribosomes and activation.

It localises to the cytoplasm. The protein localises to the nucleus. It catalyses the reaction L-seryl-[protein] + ATP = O-phospho-L-seryl-[protein] + ADP + H(+). The enzyme catalyses L-threonyl-[protein] + ATP = O-phospho-L-threonyl-[protein] + ADP + H(+). Activated in response to stress, such as ribosomal stress, osmotic shock and ionizing radiation. Activated by phosphorylation by PKN1, followed by autophosphorylation on Thr-161 and Ser-165. Functionally, stress-activated component of a protein kinase signal transduction cascade that promotes programmed cell death in response to various stress, such as ribosomal stress, osmotic shock and ionizing radiation. Acts by catalyzing phosphorylation of MAP kinase kinases, leading to activation of the JNK (MAPK8/JNK1, MAPK9/JNK2 and/or MAPK10/JNK3) and MAP kinase p38 (MAPK11, MAPK12, MAPK13 and/or MAPK14) pathways. Activates JNK through phosphorylation of MAP2K4/MKK4 and MAP2K7/MKK7, and MAP kinase p38 gamma (MAPK12) via phosphorylation of MAP2K3/MKK3 and MAP2K6/MKK6. Involved in stress associated with adrenergic stimulation: contributes to cardiac decompensation during periods of acute cardiac stress. May be involved in regulation of S and G2 cell cycle checkpoint by mediating phosphorylation of CHEK2. Its function is as follows. Key component of the stress-activated protein kinase signaling cascade in response to ribotoxic stress or UV-B irradiation. Acts as the proximal sensor of ribosome collisions during the ribotoxic stress response (RSR). Directly binds to the ribosome by inserting its flexible C-terminus into the ribosomal intersubunit space, thereby acting as a sentinel for colliding ribosomes. Upon ribosome collisions, activates either the stress-activated protein kinase signal transduction cascade or the integrated stress response (ISR), leading to programmed cell death or cell survival, respectively. Dangerous levels of ribosome collisions trigger the autophosphorylation and activation of MAP3K20, which dissociates from colliding ribosomes and phosphorylates MAP kinase kinases, leading to activation of the JNK and MAP kinase p38 pathways that promote programmed cell death. Less dangerous levels of ribosome collisions trigger the integrated stress response (ISR): MAP3K20 activates EIF2AK4/GCN2 independently of its protein-kinase activity, promoting EIF2AK4/GCN2-mediated phosphorylation of EIF2S1/eIF-2-alpha. Also acts as a histone kinase by phosphorylating histone H3 at 'Ser-28' (H3S28ph). Isoform that lacks the C-terminal region that mediates ribosome-binding: does not act as a sensor of ribosome collisions in response to ribotoxic stress. May act as an antagonist of isoform ZAKalpha: interacts with isoform ZAKalpha, leading to decrease the expression of isoform ZAKalpha. The polypeptide is Mitogen-activated protein kinase kinase kinase 20 (Mus musculus (Mouse)).